Reading from the N-terminus, the 333-residue chain is Lipoyl synthase (333 aa).

[4Fe-4S] cluster-binding residues include Cys56, Cys61, Cys67, Cys82, Cys86, Cys89, and Ser293. Residues 68 to 282 form the Radical SAM core domain; it reads WEDREATFLI…GRVGAELGFS (215 aa). The interval 301–333 is disordered; sequence QQAMTARDQDRSEMSVPPESVSENSHGQRPSPW. The span at 314 to 325 shows a compositional bias: low complexity; it reads MSVPPESVSENS.

The protein belongs to the radical SAM superfamily. Lipoyl synthase family. It depends on [4Fe-4S] cluster as a cofactor.

The protein resides in the cytoplasm. It carries out the reaction [[Fe-S] cluster scaffold protein carrying a second [4Fe-4S](2+) cluster] + N(6)-octanoyl-L-lysyl-[protein] + 2 oxidized [2Fe-2S]-[ferredoxin] + 2 S-adenosyl-L-methionine + 4 H(+) = [[Fe-S] cluster scaffold protein] + N(6)-[(R)-dihydrolipoyl]-L-lysyl-[protein] + 4 Fe(3+) + 2 hydrogen sulfide + 2 5'-deoxyadenosine + 2 L-methionine + 2 reduced [2Fe-2S]-[ferredoxin]. It functions in the pathway protein modification; protein lipoylation via endogenous pathway; protein N(6)-(lipoyl)lysine from octanoyl-[acyl-carrier-protein]: step 2/2. Catalyzes the radical-mediated insertion of two sulfur atoms into the C-6 and C-8 positions of the octanoyl moiety bound to the lipoyl domains of lipoate-dependent enzymes, thereby converting the octanoylated domains into lipoylated derivatives. The chain is Lipoyl synthase from Frankia casuarinae (strain DSM 45818 / CECT 9043 / HFP020203 / CcI3).